Here is a 126-residue protein sequence, read N- to C-terminus: FCS-Like Zinc finger 7 (126 aa).

The FLZ-type zinc-finger motif lies at 72 to 116 (SFLVNCGFCKRGLAPGRDIYMYKGDAAFCSIECREQQMEHDEGKT).

Belongs to the FLZ family. Interacts with KIN10 and KIN11 via its FLZ-type zinc finger domain. Interacts with KINB3 via its N-terminal part. Forms homodimer and heterodimer with FLZ1, FLZ2 and FLZ15 in vitro.

The protein resides in the cytoplasm. The protein localises to the nucleus. Functionally, may act as an adapter to facilitate the interaction of SnRK1 complex with effector proteins, conferring tissue- and stimulus-type specific differences in the SnRK1 regulation pathway. The sequence is that of FCS-Like Zinc finger 7 from Arabidopsis thaliana (Mouse-ear cress).